The sequence spans 448 residues: Hyaluronidase conohyal-Cn1 (448 aa).

A signal peptide spans 1–18 (MRAVVVVTGLVVVVVATA). The propeptide occupies 19-33 (LSLPNHDVKSATSSR). Positions 26–55 (VKSATSSRSSSDYQGSSGDDCDEGLPPPDQ) are disordered. Residues 31-43 (SSRSSSDYQGSSG) are compositionally biased toward low complexity. A disulfide bridge connects residues Cys67 and Cys344. Residue Asn141 is glycosylated (N-linked (GlcNAc...) asparagine). Glu151 acts as the Proton donor in catalysis. Asn169 and Asn361 each carry an N-linked (GlcNAc...) asparagine glycan. 3 disulfide bridges follow: Cys369/Cys380, Cys374/Cys413, and Cys415/Cys424. Residues 413 to 424 (CRCYSAWEGACC) form the EGF-like domain.

It belongs to the glycosyl hydrolase 56 family. As to expression, expressed by the venom duct.

Its subcellular location is the secreted. It carries out the reaction Random hydrolysis of (1-&gt;4)-linkages between N-acetyl-beta-D-glucosamine and D-glucuronate residues in hyaluronate.. Its function is as follows. Hyaluronidase catalyzes the hydrolysis of hyaluronic acid (HA), an anionic, nonsulfated glycosaminoglycan distributed widely throughout connective, epithelial, and neural tissues. In venom, they are known to enhance diffusion of the venom by degrading the extracellular matrix. The polypeptide is Hyaluronidase conohyal-Cn1 (Conus consors (Singed cone)).